The following is a 414-amino-acid chain: Tyrosine--tRNA ligase (414 aa).

Residues 57-66 carry the 'HIGH' region motif; sequence PSAPDVHIGH. The short motif at 241–245 is the 'KMSKS' region element; it reads KMSKS. Position 244 (Lys-244) interacts with ATP. Residues 352–413 enclose the S4 RNA-binding domain; sequence VPLIDLLVTL…GKRKFAKLSL (62 aa).

Belongs to the class-I aminoacyl-tRNA synthetase family. TyrS type 2 subfamily. As to quaternary structure, homodimer.

Its subcellular location is the cytoplasm. The enzyme catalyses tRNA(Tyr) + L-tyrosine + ATP = L-tyrosyl-tRNA(Tyr) + AMP + diphosphate + H(+). Catalyzes the attachment of tyrosine to tRNA(Tyr) in a two-step reaction: tyrosine is first activated by ATP to form Tyr-AMP and then transferred to the acceptor end of tRNA(Tyr). This chain is Tyrosine--tRNA ligase, found in Shouchella clausii (strain KSM-K16) (Alkalihalobacillus clausii).